A 59-amino-acid polypeptide reads, in one-letter code: Cecropin-B1 (59 aa).

The N-terminal stretch at 1-23 (MNFNKLFLIVILAALLLLGQTEA) is a signal peptide. A Leucine amide modification is found at L57.

This sequence belongs to the cecropin family.

The protein localises to the secreted. In terms of biological role, cecropins have lytic and antibacterial activity against several Gram-positive and Gram-negative bacteria. This Culex pipiens pipiens (Northern house mosquito) protein is Cecropin-B1 (CECB1).